We begin with the raw amino-acid sequence, 246 residues long: tRNA (guanine-N(1)-)-methyltransferase (246 aa).

S-adenosyl-L-methionine contacts are provided by residues Gly-114 and 134–139; that span reads IGDYIL. The segment covering 219–231 has biased composition (basic and acidic residues); it reads LRRPDLWERHEGA. Positions 219 to 246 are disordered; sequence LRRPDLWERHEGARAQSPSGARRQKKER.

Belongs to the RNA methyltransferase TrmD family. Homodimer.

Its subcellular location is the cytoplasm. The catalysed reaction is guanosine(37) in tRNA + S-adenosyl-L-methionine = N(1)-methylguanosine(37) in tRNA + S-adenosyl-L-homocysteine + H(+). Functionally, specifically methylates guanosine-37 in various tRNAs. The sequence is that of tRNA (guanine-N(1)-)-methyltransferase from Rhizorhabdus wittichii (strain DSM 6014 / CCUG 31198 / JCM 15750 / NBRC 105917 / EY 4224 / RW1) (Sphingomonas wittichii).